A 386-amino-acid polypeptide reads, in one-letter code: ATP phosphoribosyltransferase regulatory subunit (386 aa).

This sequence belongs to the class-II aminoacyl-tRNA synthetase family. HisZ subfamily. Heteromultimer composed of HisG and HisZ subunits.

It is found in the cytoplasm. It participates in amino-acid biosynthesis; L-histidine biosynthesis; L-histidine from 5-phospho-alpha-D-ribose 1-diphosphate: step 1/9. In terms of biological role, required for the first step of histidine biosynthesis. May allow the feedback regulation of ATP phosphoribosyltransferase activity by histidine. This is ATP phosphoribosyltransferase regulatory subunit from Variovorax paradoxus (strain S110).